Reading from the N-terminus, the 581-residue chain is Proline--tRNA ligase (581 aa).

This sequence belongs to the class-II aminoacyl-tRNA synthetase family. ProS type 1 subfamily. In terms of assembly, homodimer.

It localises to the cytoplasm. The enzyme catalyses tRNA(Pro) + L-proline + ATP = L-prolyl-tRNA(Pro) + AMP + diphosphate. Catalyzes the attachment of proline to tRNA(Pro) in a two-step reaction: proline is first activated by ATP to form Pro-AMP and then transferred to the acceptor end of tRNA(Pro). As ProRS can inadvertently accommodate and process non-cognate amino acids such as alanine and cysteine, to avoid such errors it has two additional distinct editing activities against alanine. One activity is designated as 'pretransfer' editing and involves the tRNA(Pro)-independent hydrolysis of activated Ala-AMP. The other activity is designated 'posttransfer' editing and involves deacylation of mischarged Ala-tRNA(Pro). The misacylated Cys-tRNA(Pro) is not edited by ProRS. This Rhodococcus erythropolis (strain PR4 / NBRC 100887) protein is Proline--tRNA ligase.